The chain runs to 213 residues: Protein-L-isoaspartate O-methyltransferase (213 aa).

The active site involves Ser62.

This sequence belongs to the methyltransferase superfamily. L-isoaspartyl/D-aspartyl protein methyltransferase family.

The protein localises to the cytoplasm. The catalysed reaction is [protein]-L-isoaspartate + S-adenosyl-L-methionine = [protein]-L-isoaspartate alpha-methyl ester + S-adenosyl-L-homocysteine. Its function is as follows. Catalyzes the methyl esterification of L-isoaspartyl residues in peptides and proteins that result from spontaneous decomposition of normal L-aspartyl and L-asparaginyl residues. It plays a role in the repair and/or degradation of damaged proteins. The sequence is that of Protein-L-isoaspartate O-methyltransferase from Idiomarina loihiensis (strain ATCC BAA-735 / DSM 15497 / L2-TR).